We begin with the raw amino-acid sequence, 396 residues long: Small ribosomal subunit protein mS27 (396 aa).

The protein belongs to the mitochondrion-specific ribosomal protein mS27 family. Component of the mitochondrial small ribosomal subunit (mt-SSU). Mature N.crassa 74S mitochondrial ribosomes consist of a small (37S) and a large (54S) subunit. The 37S small subunit contains a 16S ribosomal RNA (16S mt-rRNA) and 32 different proteins. The 54S large subunit contains a 23S rRNA (23S mt-rRNA) and 42 different proteins.

It localises to the mitochondrion. Functionally, component of the mitochondrial ribosome (mitoribosome), a dedicated translation machinery responsible for the synthesis of mitochondrial genome-encoded proteins, including at least some of the essential transmembrane subunits of the mitochondrial respiratory chain. The mitoribosomes are attached to the mitochondrial inner membrane and translation products are cotranslationally integrated into the membrane. The sequence is that of Small ribosomal subunit protein mS27 (mrp13) from Neurospora crassa (strain ATCC 24698 / 74-OR23-1A / CBS 708.71 / DSM 1257 / FGSC 987).